Reading from the N-terminus, the 341-residue chain is tRNA N6-adenosine threonylcarbamoyltransferase (341 aa).

His-111 and His-115 together coordinate Fe cation. Substrate-binding positions include 134–138 (LVSGG), Asp-167, Gly-180, and Asn-276. Asp-304 is a Fe cation binding site.

Belongs to the KAE1 / TsaD family. Fe(2+) serves as cofactor.

The protein localises to the cytoplasm. The catalysed reaction is L-threonylcarbamoyladenylate + adenosine(37) in tRNA = N(6)-L-threonylcarbamoyladenosine(37) in tRNA + AMP + H(+). Its function is as follows. Required for the formation of a threonylcarbamoyl group on adenosine at position 37 (t(6)A37) in tRNAs that read codons beginning with adenine. Is involved in the transfer of the threonylcarbamoyl moiety of threonylcarbamoyl-AMP (TC-AMP) to the N6 group of A37, together with TsaE and TsaB. TsaD likely plays a direct catalytic role in this reaction. This Pseudomonas fluorescens (strain SBW25) protein is tRNA N6-adenosine threonylcarbamoyltransferase.